The following is a 266-amino-acid chain: 5'-nucleotidase SurE (266 aa).

Residues Asp8, Asp9, Ser39, and Asn93 each contribute to the a divalent metal cation site.

The protein belongs to the SurE nucleotidase family. It depends on a divalent metal cation as a cofactor.

It localises to the cytoplasm. The catalysed reaction is a ribonucleoside 5'-phosphate + H2O = a ribonucleoside + phosphate. Nucleotidase that shows phosphatase activity on nucleoside 5'-monophosphates. In Pyrobaculum arsenaticum (strain DSM 13514 / JCM 11321 / PZ6), this protein is 5'-nucleotidase SurE.